The sequence spans 335 residues: RNA polymerase sigma factor RpoS (335 aa).

The tract at residues 57–90 is sigma-70 factor domain-1; sequence DATQMYLSEIGFSPLLTAEEEVLYARRALRGDEA. Positions 95 to 165 are sigma-70 factor domain-2; it reads MIESNLRLVV…ERALMNQTRT (71 aa). An Interaction with polymerase core subunit RpoC motif is present at residues 119–122; sequence DLIE. The tract at residues 175-250 is sigma-70 factor domain-3; sequence ELNIYLRTAR…DSHNADPEFS (76 aa). Positions 263 to 316 are sigma-70 factor domain-4; it reads WLDELNPKQKEVLARRFGLLGYEPSTLEEVGREINLTRERVRQIQVEGLRRLRE. The H-T-H motif DNA-binding region spans 289–308; that stretch reads LEEVGREINLTRERVRQIQV.

The protein belongs to the sigma-70 factor family. RpoS subfamily. In terms of assembly, interacts with the RNA polymerase core enzyme.

It is found in the cytoplasm. In terms of biological role, sigma factors are initiation factors that promote the attachment of RNA polymerase to specific initiation sites and are then released. This sigma factor is the master transcriptional regulator of the stationary phase and the general stress response. May be required for the persistence of V.cholerae in aquatic habitats. The protein is RNA polymerase sigma factor RpoS of Vibrio cholerae serotype O1 (strain ATCC 39315 / El Tor Inaba N16961).